The primary structure comprises 257 residues: 1-acyl-sn-glycerol-3-phosphate acyltransferase (257 aa).

A helical transmembrane segment spans residues 10–30; that stretch reads VLFYLLLSASAFVWGTLSFFI. The HXXXXD motif signature appears at 82-87; that stretch reads HQSTWE. Residues 105-125 form a helical membrane-spanning segment; sequence ELLYVPFFGWALALLKPIAID.

Belongs to the 1-acyl-sn-glycerol-3-phosphate acyltransferase family.

Its subcellular location is the cell inner membrane. It catalyses the reaction a 1-acyl-sn-glycero-3-phosphate + an acyl-CoA = a 1,2-diacyl-sn-glycero-3-phosphate + CoA. The protein operates within phospholipid metabolism; CDP-diacylglycerol biosynthesis; CDP-diacylglycerol from sn-glycerol 3-phosphate: step 2/3. In terms of biological role, converts lysophosphatidic acid (LPA) into phosphatidic acid by incorporating acyl moiety at the 2 position. This chain is 1-acyl-sn-glycerol-3-phosphate acyltransferase, found in Pseudomonas aeruginosa (strain ATCC 15692 / DSM 22644 / CIP 104116 / JCM 14847 / LMG 12228 / 1C / PRS 101 / PAO1).